Reading from the N-terminus, the 380-residue chain is MAPNPRKSHPILKMVNNSLIDLPTPPNISAWWNFGSLLGICLVTQILTGLLLATHYTADTSLAFSSVAHTCRNVQYGWLIRNLHANGASLFFICIYLHIGRGLYYGSYLYKETWNTGVILLLSLMATAFVGYVLPWGQMSFWGATVITNLFSAFPYIGQTLVEWAWGGFSVDNPTLTRFFALHFLLPFLIAGLTLTHLTFLHETGSNNPLGLISNCDKIPFHPYFSPKDLLGFILMFLPLTALALFSPNLLGDPENFTPANPLVTPPHIKPEWYFLFAYAILRSIPNKLGGVLALAASVLILFLAPFLHKSKQRTMTFRPLSQLLFWILVTNLLILTWVGSQPVEQPFIIIGQLASLAYFIILLILFPIIGALENKMLNF.

A run of 4 helical transmembrane segments spans residues 34–54 (FGSL…LLAT), 78–99 (WLIR…YLHI), 114–134 (WNTG…GYVL), and 179–199 (FFAL…THLT). Heme b contacts are provided by His-84 and His-98. Heme b is bound by residues His-183 and His-197. Position 202 (His-202) interacts with a ubiquinone. 4 helical membrane passes run 227–247 (PKDL…ALFS), 289–309 (LGGV…PFLH), 321–341 (LSQL…WVGS), and 348–368 (FIII…ILFP).

Belongs to the cytochrome b family. The cytochrome bc1 complex contains 11 subunits: 3 respiratory subunits (MT-CYB, CYC1 and UQCRFS1), 2 core proteins (UQCRC1 and UQCRC2) and 6 low-molecular weight proteins (UQCRH/QCR6, UQCRB/QCR7, UQCRQ/QCR8, UQCR10/QCR9, UQCR11/QCR10 and a cleavage product of UQCRFS1). This cytochrome bc1 complex then forms a dimer. Requires heme b as cofactor.

Its subcellular location is the mitochondrion inner membrane. Component of the ubiquinol-cytochrome c reductase complex (complex III or cytochrome b-c1 complex) that is part of the mitochondrial respiratory chain. The b-c1 complex mediates electron transfer from ubiquinol to cytochrome c. Contributes to the generation of a proton gradient across the mitochondrial membrane that is then used for ATP synthesis. The protein is Cytochrome b (MT-CYB) of Todus todus (Jamaican tody).